Reading from the N-terminus, the 456-residue chain is Bifunctional protein GlmU (456 aa).

Positions 1 to 228 (MTLPLHVLIL…PQDVEGANDP (228 aa)) are pyrophosphorylase. UDP-N-acetyl-alpha-D-glucosamine is bound by residues 10-13 (LAAG), Lys24, Gln76, 81-82 (GT), 103-105 (YGD), Gly138, Glu153, Asn168, and Asn226. Asp105 provides a ligand contact to Mg(2+). Asn226 contacts Mg(2+). Residues 229–249 (WQLAQLERAWQLRAARTLCLQ) are linker. The segment at 250–456 (GVRMADPARV…GWKRPTKKSP (207 aa)) is N-acetyltransferase. UDP-N-acetyl-alpha-D-glucosamine is bound by residues Arg332 and Lys350. Catalysis depends on His362, which acts as the Proton acceptor. The UDP-N-acetyl-alpha-D-glucosamine site is built by Tyr365 and Asn376. Acetyl-CoA contacts are provided by residues Ala379, 385–386 (NY), Ser404, Ala422, and Arg439.

This sequence in the N-terminal section; belongs to the N-acetylglucosamine-1-phosphate uridyltransferase family. The protein in the C-terminal section; belongs to the transferase hexapeptide repeat family. As to quaternary structure, homotrimer. The cofactor is Mg(2+).

It is found in the cytoplasm. The catalysed reaction is alpha-D-glucosamine 1-phosphate + acetyl-CoA = N-acetyl-alpha-D-glucosamine 1-phosphate + CoA + H(+). It catalyses the reaction N-acetyl-alpha-D-glucosamine 1-phosphate + UTP + H(+) = UDP-N-acetyl-alpha-D-glucosamine + diphosphate. The protein operates within nucleotide-sugar biosynthesis; UDP-N-acetyl-alpha-D-glucosamine biosynthesis; N-acetyl-alpha-D-glucosamine 1-phosphate from alpha-D-glucosamine 6-phosphate (route II): step 2/2. It participates in nucleotide-sugar biosynthesis; UDP-N-acetyl-alpha-D-glucosamine biosynthesis; UDP-N-acetyl-alpha-D-glucosamine from N-acetyl-alpha-D-glucosamine 1-phosphate: step 1/1. It functions in the pathway bacterial outer membrane biogenesis; LPS lipid A biosynthesis. Its function is as follows. Catalyzes the last two sequential reactions in the de novo biosynthetic pathway for UDP-N-acetylglucosamine (UDP-GlcNAc). The C-terminal domain catalyzes the transfer of acetyl group from acetyl coenzyme A to glucosamine-1-phosphate (GlcN-1-P) to produce N-acetylglucosamine-1-phosphate (GlcNAc-1-P), which is converted into UDP-GlcNAc by the transfer of uridine 5-monophosphate (from uridine 5-triphosphate), a reaction catalyzed by the N-terminal domain. This is Bifunctional protein GlmU from Xanthomonas axonopodis pv. citri (strain 306).